We begin with the raw amino-acid sequence, 271 residues long: N-acylmannosamine 1-dehydrogenase (271 aa).

Residue 20–44 participates in NAD(+) binding; sequence VTGAAGGIGRATVEAYLREGASVVA. Substrate is bound at residue serine 153. Tyrosine 166 acts as the Proton acceptor in catalysis.

The protein belongs to the short-chain dehydrogenases/reductases (SDR) family.

It carries out the reaction an N-acyl-D-mannosamine + NAD(+) = an N-acyl-D-mannosaminolactone + NADH + H(+). In terms of biological role, acts on acetyl-D-mannosamine and glycolyl-D-mannosamine. This chain is N-acylmannosamine 1-dehydrogenase, found in Flavobacterium sp. (strain 141-8).